The primary structure comprises 317 residues: NADH-quinone oxidoreductase subunit H 1 (317 aa).

8 helical membrane passes run 7–27 (IWVNLILILAVLFAFAAMLSW), 74–94 (AVFVLAPAIVAVTTLLAFAVV), 107–127 (IGVLFFLAMSSLGVYSIVLGG), 147–167 (LSYEVFMGLALMGVVMLAGSF), 179–199 (LWFCIPQILGLATFAVAGIAE), 230–250 (FFIGEYVGITLISAMIVTLFF), 257–277 (VLPPLAWFLLKTFIVIICFVL), and 297–317 (VMLPVTLVNLLLTGAVVLSVA).

Belongs to the complex I subunit 1 family. NDH-1 is composed of 14 different subunits. Subunits NuoA, H, J, K, L, M, N constitute the membrane sector of the complex.

The protein localises to the cell inner membrane. It carries out the reaction a quinone + NADH + 5 H(+)(in) = a quinol + NAD(+) + 4 H(+)(out). NDH-1 shuttles electrons from NADH, via FMN and iron-sulfur (Fe-S) centers, to quinones in the respiratory chain. The immediate electron acceptor for the enzyme in this species is believed to be ubiquinone. Couples the redox reaction to proton translocation (for every two electrons transferred, four hydrogen ions are translocated across the cytoplasmic membrane), and thus conserves the redox energy in a proton gradient. This subunit may bind ubiquinone. The chain is NADH-quinone oxidoreductase subunit H 1 from Nitrosospira multiformis (strain ATCC 25196 / NCIMB 11849 / C 71).